A 445-amino-acid chain; its full sequence is UDP-N-acetylglucosamine--peptide N-acetylglucosaminyltransferase stabilizing protein GtfB (445 aa).

The segment at 55–171 is glycosyltransferase 1; sequence KPLYFNQVPV…TLPGQSMRYF (117 aa).

Belongs to the GtfB family. In terms of assembly, interacts with glycosyltransferase GtfA; probably forms a heterotetramer with 2 subunits each of GtfA and GtfB. Part of the accessory SecA2/SecY2 protein translocation apparatus.

Its subcellular location is the cell membrane. Its pathway is protein modification; protein glycosylation. Functionally, required for the polymorphic O-glycosylation of the serine-rich repeat protein PsrP. A stabilizing protein that is part of the accessory SecA2/SecY2 system specifically required to export serine-rich repeat cell wall proteins encoded upstream in the same operon. The GtfA-GtfB complex adds GlcNAc from UDP-GlcNAc to PsrP, attaching the first sugar residue. Stabilizes the glycosylation activity of GtfA. Has no N-acetylglucosaminyl transferase activity on its own. In Streptococcus pneumoniae serotype 4 (strain ATCC BAA-334 / TIGR4), this protein is UDP-N-acetylglucosamine--peptide N-acetylglucosaminyltransferase stabilizing protein GtfB.